A 95-amino-acid chain; its full sequence is Aspartyl/glutamyl-tRNA(Asn/Gln) amidotransferase subunit C (95 aa).

It belongs to the GatC family. Heterotrimer of A, B and C subunits.

The catalysed reaction is L-glutamyl-tRNA(Gln) + L-glutamine + ATP + H2O = L-glutaminyl-tRNA(Gln) + L-glutamate + ADP + phosphate + H(+). It carries out the reaction L-aspartyl-tRNA(Asn) + L-glutamine + ATP + H2O = L-asparaginyl-tRNA(Asn) + L-glutamate + ADP + phosphate + 2 H(+). Functionally, allows the formation of correctly charged Asn-tRNA(Asn) or Gln-tRNA(Gln) through the transamidation of misacylated Asp-tRNA(Asn) or Glu-tRNA(Gln) in organisms which lack either or both of asparaginyl-tRNA or glutaminyl-tRNA synthetases. The reaction takes place in the presence of glutamine and ATP through an activated phospho-Asp-tRNA(Asn) or phospho-Glu-tRNA(Gln). This is Aspartyl/glutamyl-tRNA(Asn/Gln) amidotransferase subunit C from Bradyrhizobium diazoefficiens (strain JCM 10833 / BCRC 13528 / IAM 13628 / NBRC 14792 / USDA 110).